Here is a 306-residue protein sequence, read N- to C-terminus: Aspartate carbamoyltransferase catalytic subunit (306 aa).

Residues Arg55 and Thr56 each contribute to the carbamoyl phosphate site. An L-aspartate-binding site is contributed by Lys84. Residues Arg105, His133, and Gln136 each contribute to the carbamoyl phosphate site. The L-aspartate site is built by Arg166 and Arg227. 2 residues coordinate carbamoyl phosphate: Leu265 and Pro266.

Belongs to the aspartate/ornithine carbamoyltransferase superfamily. ATCase family. In terms of assembly, heterododecamer (2C3:3R2) of six catalytic PyrB chains organized as two trimers (C3), and six regulatory PyrI chains organized as three dimers (R2).

The enzyme catalyses carbamoyl phosphate + L-aspartate = N-carbamoyl-L-aspartate + phosphate + H(+). It functions in the pathway pyrimidine metabolism; UMP biosynthesis via de novo pathway; (S)-dihydroorotate from bicarbonate: step 2/3. Its function is as follows. Catalyzes the condensation of carbamoyl phosphate and aspartate to form carbamoyl aspartate and inorganic phosphate, the committed step in the de novo pyrimidine nucleotide biosynthesis pathway. The polypeptide is Aspartate carbamoyltransferase catalytic subunit (Neisseria gonorrhoeae (strain ATCC 700825 / FA 1090)).